The sequence spans 90 residues: UPF0213 protein Reut_B5558 (90 aa).

A GIY-YIG domain is found at 5–80; it reads RQWYLYLLEC…KRMSSAQKIA (76 aa).

Belongs to the UPF0213 family.

The polypeptide is UPF0213 protein Reut_B5558 (Cupriavidus pinatubonensis (strain JMP 134 / LMG 1197) (Cupriavidus necator (strain JMP 134))).